We begin with the raw amino-acid sequence, 281 residues long: Putative thiosulfate sulfurtransferase (281 aa).

2 Rhodanese domains span residues 18 to 125 (NTDG…ELTK) and 154 to 274 (AIGN…VPIE). The Cysteine persulfide intermediate role is filled by Cys233. Arg238 is a substrate binding site.

The catalysed reaction is thiosulfate + hydrogen cyanide = thiocyanate + sulfite + 2 H(+). In terms of biological role, may be a sulfotransferase involved in the formation of thiosulfate. In Saccharopolyspora erythraea (Streptomyces erythraeus), this protein is Putative thiosulfate sulfurtransferase (cysA).